We begin with the raw amino-acid sequence, 579 residues long: Protein LYRIC (579 aa).

The Lumenal segment spans residues 1 to 48; sequence MAARSWQDELAQQAEEGSARLRELLSVGLGFLRTELGLDLGLEPKRYP. The interval 1–71 is activation of NF-kappa-B; sequence MAARSWQDEL…LLLFLLGYGW (71 aa). The helical transmembrane segment at 49 to 69 threads the bilayer; that stretch reads GWVILVGTGALGLLLLFLLGY. Residues 70 to 579 are Cytoplasmic-facing; that stretch reads GWAAACAGAR…KKKKKARRET (510 aa). Positions 72-168 are interaction with BCCIP; the sequence is AAACAGARKK…EKSKKNKKKS (97 aa). The disordered stretch occupies residues 78 to 222; sequence ARKKRRSPPR…SGSLDSTIPG (145 aa). An interaction with RELA region spans residues 100-204; it reads DDLAQLKNLR…ISHREKRQQR (105 aa). The segment covering 108-126 has biased composition (basic and acidic residues); it reads LRSEEQKKKNRKKLPEKPK. The segment covering 159–168 has biased composition (basic residues); sequence EKSKKNKKKS. Ser-179 is subject to Phosphoserine. The span at 197–207 shows a compositional bias: basic residues; the sequence is HREKRQQRKRD. A phosphoserine mark is found at Ser-215 and Ser-250. Lys-263 bears the N6-acetyllysine mark. Positions 277-579 are disordered; it reads NLTVNGGGWS…KKKKKARRET (303 aa). A phosphoserine mark is found at Ser-297, Ser-303, and Ser-308. The span at 317 to 329 shows a compositional bias: polar residues; sequence SAWTQDTGDTNAN. 2 positions are modified to phosphoserine: Ser-341 and Ser-366. Polar residues-rich tracts occupy residues 351-369, 380-391, and 410-420; these read EPVS…SRNQ, NGLSSADPSSDW, and LKSQEPISNDQ. Residues 378–440 are lung-homing for mammary tumors; that stretch reads GLNGLSSADP…EGALPTGKSK (63 aa). A phosphoserine mark is found at Ser-412 and Ser-423. Residues 421–431 show a composition bias toward basic and acidic residues; sequence KVSDDDKEKGE. A compositionally biased stretch (basic residues) spans 438-448; sequence KSKKKKKKKKK. Residues 449–470 show a composition bias toward basic and acidic residues; sequence QGEDNSHTQDTEDLEKDTREEL. Phosphoserine occurs at positions 454, 475, 491, and 493. 2 stretches are compositionally biased toward polar residues: residues 517-533 and 546-565; these read PSIT…SSQV and NAKQ…NWES. Ser-565 carries the post-translational modification Phosphoserine. Residues 568 to 579 are compositionally biased toward basic residues; the sequence is QIKKKKKARRET.

In terms of assembly, interacts with BCCIP, CREBBP/CBP and RELA/p65. In the mammary gland, expressed at the apical surface of epithelial cells lining ducts, as well as in the mammary fat pad. Not detected in the spleen, kidney, lung, or skin; minute amounts seen in the liver. Expressed in Purkinje neurons in the early postnatal and adult cerebellum. Overexpressed in mammary tumors (at protein level).

The protein localises to the endoplasmic reticulum membrane. It localises to the nucleus membrane. Its subcellular location is the cell junction. It is found in the tight junction. The protein resides in the nucleus. The protein localises to the nucleolus. It localises to the cytoplasm. Its subcellular location is the perinuclear region. In terms of biological role, down-regulates SLC1A2/EAAT2 promoter activity when expressed ectopically. Activates the nuclear factor kappa-B (NF-kappa-B) transcription factor. Promotes anchorage-independent growth of immortalized melanocytes and astrocytes which is a key component in tumor cell expansion. Promotes lung metastasis and also has an effect on bone and brain metastasis, possibly by enhancing the seeding of tumor cells to the target organ endothelium. Induces chemoresistance. In Mus musculus (Mouse), this protein is Protein LYRIC (Mtdh).